The following is a 337-amino-acid chain: Protein EXORDIUM-like 3 (337 aa).

The signal sequence occupies residues 1–25; sequence MHSLPVNLVLTVLTVFLTSPAQVIG. Residues N34, N66, and N119 are each glycosylated (N-linked (GlcNAc...) asparagine).

Belongs to the EXORDIUM family.

It is found in the secreted. Its subcellular location is the extracellular space. The protein localises to the apoplast. Its function is as follows. May play a role in a brassinosteroid-dependent regulation of growth and development. The polypeptide is Protein EXORDIUM-like 3 (EXL3) (Arabidopsis thaliana (Mouse-ear cress)).